A 424-amino-acid polypeptide reads, in one-letter code: 5-methylthioadenosine/S-adenosylhomocysteine deaminase (424 aa).

Zn(2+)-binding residues include His-60 and His-62. Substrate-binding residues include Glu-89 and His-181. His-208 serves as a coordination point for Zn(2+). Positions 211 and 296 each coordinate substrate. Asp-296 contributes to the Zn(2+) binding site.

It belongs to the metallo-dependent hydrolases superfamily. MTA/SAH deaminase family. Zn(2+) serves as cofactor.

The enzyme catalyses S-adenosyl-L-homocysteine + H2O + H(+) = S-inosyl-L-homocysteine + NH4(+). The catalysed reaction is S-methyl-5'-thioadenosine + H2O + H(+) = S-methyl-5'-thioinosine + NH4(+). Catalyzes the deamination of 5-methylthioadenosine and S-adenosyl-L-homocysteine into 5-methylthioinosine and S-inosyl-L-homocysteine, respectively. Is also able to deaminate adenosine. The chain is 5-methylthioadenosine/S-adenosylhomocysteine deaminase from Thermococcus sibiricus (strain DSM 12597 / MM 739).